Here is a 372-residue protein sequence, read N- to C-terminus: MSAFVNIDAQRIPVALSHQPYEVVIGGEGLRGVGKELRRAGLKEGIKVLVVSNADVAEPYGDLCLQSLKESGFRPTLLVIEAGEDQKTPVSVALIHDAAYEAKLERGSLMVALGGGVVGDMTGFAAATWLRGISVVQLPTTLLAMVDAAIGGKTGVNHPGGKNLIGAFHQPRLVLIDPSTLKTLPEREFRAGMAEVIKYGVIGDSALFQLLEGIQELDTPSQLHQDLLEKILERSALAKSRVVSSDEREGGLRAILNYGHTFGHVVETLCGYGNWLHGEAVAIGMVAVGELAVLRQSWSRDDANRQKSLIAKAGLPIAWPKLDPEEVLYTLQGDKKVKDGKLRFVIPTGIGNVEIKNDVSREEIRKCLSELS.

NAD(+) is bound by residues 116 to 120 (GVVGD), 140 to 141 (TT), Lys-153, Lys-162, and 180 to 183 (TLKT). 3 residues coordinate Zn(2+): Glu-195, His-260, and His-277.

Belongs to the sugar phosphate cyclases superfamily. Dehydroquinate synthase family. It depends on NAD(+) as a cofactor. The cofactor is Co(2+). Zn(2+) serves as cofactor.

It localises to the cytoplasm. It carries out the reaction 7-phospho-2-dehydro-3-deoxy-D-arabino-heptonate = 3-dehydroquinate + phosphate. Its pathway is metabolic intermediate biosynthesis; chorismate biosynthesis; chorismate from D-erythrose 4-phosphate and phosphoenolpyruvate: step 2/7. Functionally, catalyzes the conversion of 3-deoxy-D-arabino-heptulosonate 7-phosphate (DAHP) to dehydroquinate (DHQ). The protein is 3-dehydroquinate synthase of Prochlorococcus marinus (strain MIT 9313).